We begin with the raw amino-acid sequence, 329 residues long: MKIAIDAMGGDHAPKEIVIGAQKAIEHFQDIEITLVGNETLIRPYITNDERLSIIHTEQVIEATDEPVRAVRRKKEASMVLMANEVSEGRAHACISAGNTGALMAAGLFIVGRIDGIDRPALAPTLPTIDGKGFVLLDVGANVDARPEHILQYALMGAAYAEKVRGIHRPRIGLLNVGTEDQKGNELAKKTFQLIQDTSLNFVGNVEARDLLEGVADVVVTDGFTGNVALKTIEGTAIAVFSMLKSALTSNVVSKMAALALKPQLMQLKKKMDYAEYGGAALFGLRAPVIKAHGSSDAHAIFHAVRQAREMVVNDVIQTVKQSIAEIKQ.

The protein belongs to the PlsX family. As to quaternary structure, homodimer. Probably interacts with PlsY.

It localises to the cytoplasm. It carries out the reaction a fatty acyl-[ACP] + phosphate = an acyl phosphate + holo-[ACP]. The protein operates within lipid metabolism; phospholipid metabolism. Its function is as follows. Catalyzes the reversible formation of acyl-phosphate (acyl-PO(4)) from acyl-[acyl-carrier-protein] (acyl-ACP). This enzyme utilizes acyl-ACP as fatty acyl donor, but not acyl-CoA. This is Phosphate acyltransferase from Anoxybacillus flavithermus (strain DSM 21510 / WK1).